The chain runs to 621 residues: Stimulated by retinoic acid gene 6 protein-like (621 aa).

At 1-21 (MLAASTRTRQINITCDNPVDR) the chain is on the extracellular side. An N-linked (GlcNAc...) asparagine glycan is attached at asparagine 12. The helical transmembrane segment at 22 to 42 (EVFLHYSLIPSLCIILVLSFL) threads the bilayer. The Cytoplasmic portion of the chain corresponds to 43 to 53 (QRREHRRQRDD). The chain crosses the membrane as a helical span at residues 54 to 74 (TSYLLGNHFGIIVPLDFVGTF). The Extracellular segment spans residues 75–110 (SNRWSYGAAFGATANKVMFLFSEGYQPLTVPQWAQA). A helical transmembrane segment spans residues 111-131 (FVLFIGGMEVGLSYFPFFACL). The Cytoplasmic segment spans residues 132–137 (SSEFQL). A helical transmembrane segment spans residues 138 to 158 (VSSILGFSYSLTWFVVTVLQI). At 159–173 (SQCPHGQFLGRFETL) the chain is on the extracellular side. Residues 174-194 (VFYWPSLLCLGFLLGRFLHMF) traverse the membrane as a helical segment. At 195–258 (LKALPVHLGL…CFQFPSRMVG (64 aa)) the chain is on the cytoplasmic side. A helical transmembrane segment spans residues 259–279 (TLLLAFICLYLFIVIEFCVFL). Topologically, residues 280–321 (HVRDKLDMFEDKLESYLTHMNETGTLTPIILQVKELISVTKG) are extracellular. A helical transmembrane segment spans residues 322-342 (VWVVTILPAALTCVTYLFHIL). Residues 343-383 (ACYRKHMKRLWAGDKHFLPQKFHSPSSAASVVAIARYSGWQ) are Cytoplasmic-facing. A helical transmembrane segment spans residues 384 to 404 (IAYILWGYLIIHVVQSLCGVM). The Extracellular segment spans residues 405–424 (LMYGLVLPIIHHRGLEMLQG). The helical transmembrane segment at 425–445 (FGLGVLTLSIVVGLIILQVWI) threads the bilayer. Residues 446-476 (AGTFFLQPKLGTSDKQKPLALNNRRAFHNFN) are Cytoplasmic-facing. A helical membrane pass occupies residues 477-497 (YFLFFYNVLLGLGACLSRLLI). Topologically, residues 498-621 (SCLLGTWLIA…TQILLTCSDC (124 aa)) are extracellular. Threonine 612 carries the phosphothreonine modification.

Glycosylated. As to expression, highly expressed in liver and small intestine. Also expressed in spleen, kidney, colon, stomach, placenta, adipose tissue and isolated adipocytes.

Its subcellular location is the cell membrane. Functionally, acts as a high-affinity cell-surface receptor for retinol-binding protein RBP4 and mediates RBP4-dependent retinol uptake in the liver. The sequence is that of Stimulated by retinoic acid gene 6 protein-like from Mus musculus (Mouse).